We begin with the raw amino-acid sequence, 87 residues long: Selenoprotein W (87 aa).

A cross-link (cysteinyl-selenocysteine (Cys-Sec); redox-active) is located at residues 10-13 (CGAU). A non-standard amino acid (selenocysteine) is located at residue Sec13. Cys37 carries the S-glutathionyl cysteine modification.

Belongs to the SelWTH family. Selenoprotein W subfamily. As to quaternary structure, interacts with DPYSL2, PRDX1, YWHAB, YWHAG, HSP70 and HSP90.

The protein resides in the cytoplasm. Plays a role as a glutathione (GSH)-dependent antioxidant. May be involved in a redox-related process. May play a role in the myopathies of selenium deficiency. The polypeptide is Selenoprotein W (Sus scrofa (Pig)).